The primary structure comprises 252 residues: Carbohydrate deacetylase (252 aa).

H59 and H122 together coordinate Mg(2+).

The protein belongs to the YdjC deacetylase family. Homodimer. Requires Mg(2+) as cofactor.

Functionally, probably catalyzes the deacetylation of acetylated carbohydrates an important step in the degradation of oligosaccharides. The polypeptide is Carbohydrate deacetylase (Vibrio cholerae serotype O1 (strain ATCC 39315 / El Tor Inaba N16961)).